A 461-amino-acid chain; its full sequence is Steroidogenic factor 1 (461 aa).

The nuclear receptor DNA-binding region spans 10–85 (DELCPVCGDK…VGMRLEAVRA (76 aa)). An NR C4-type zinc finger spans residues 13–33 (CPVCGDKVSGYHYGLLTCESC). Lys-34, Lys-38, and Lys-72 each carry N6-acetyllysine. The segment at 49 to 73 (CTESQSCKIDKTQRKRCPFCRFQKC) adopts an NR C4-type zinc-finger fold. A Glycyl lysine isopeptide (Lys-Gly) (interchain with G-Cter in SUMO) cross-link involves residue Lys-119. The interval 119–157 (KLETGPPMGVPPPPPPAPDYVLPPSLHGPEPKGLAAGPP) is disordered. Over residues 126 to 136 (MGVPPPPPPAP) the composition is skewed to pro residues. A Glycyl lysine isopeptide (Lys-Gly) (interchain with G-Cter in SUMO) cross-link involves residue Lys-194. The residue at position 203 (Ser-203) is a Phosphoserine; by CDK7. An NR LBD domain is found at 222–459 (NVPELILQLL…NLLIEMLQAK (238 aa)). The segment at 230–461 (LLQLEPDEDQ…LIEMLQAKQT (232 aa)) is important for dimerization. A 1,2-diacyl-sn-glycero-3-phosphocholine-binding residues include Gly-341, Tyr-436, and Lys-440. Gly-341, Tyr-436, and Lys-440 together coordinate a 1,2-diacylglycero-3-phosphoethanolamine.

Belongs to the nuclear hormone receptor family. NR5 subfamily. Binds DNA as a monomer. Interacts with NR0B2 and PPARGC1A. Part of a complex consisting of SFPQ, NONO and NR5A1. Interacts with NCOA2. Interacts with DGKQ and CDK7. Binds to and activated by HIPK3. Acetylation stimulates the transcriptional activity. In terms of processing, sumoylation reduces CDK7-mediated phosphorylation on Ser-203. Post-translationally, phosphorylated on Ser-203 by CDK7. This phosphorylation promotes transcriptional activity. High expressed in the adrenal cortex, the ovary, the testis, and the spleen.

Its subcellular location is the nucleus. Functionally, transcriptional activator. Essential for sexual differentiation and formation of the primary steroidogenic tissues. Binds to the Ad4 site found in the promoter region of steroidogenic P450 genes such as CYP11A, CYP11B and CYP21B. Also regulates the AMH/Muellerian inhibiting substance gene as well as the AHCH and STAR genes. 5'-YCAAGGYC-3' and 5'-RRAGGTCA-3' are the consensus sequences for the recognition by NR5A1. The SFPQ-NONO-NR5A1 complex binds to the CYP17 promoter and regulates basal and cAMP-dependent transcriptional activity. Binds phosphatidylcholine. Binds phospholipids with a phosphatidylinositol (PI) headgroup, in particular PI(3,4)P2 and PI(3,4,5)P3. Activated by the phosphorylation of NR5A1 by HIPK3 leading to increased steroidogenic gene expression upon cAMP signaling pathway stimulation. The polypeptide is Steroidogenic factor 1 (NR5A1) (Homo sapiens (Human)).